The sequence spans 613 residues: ATP-dependent zinc metalloprotease FtsH (613 aa).

At 1-4 (MVKN) the chain is on the cytoplasmic side. Residues 5–25 (LIFWLVITVVLMSVFQNFNSS) form a helical membrane-spanning segment. Residues 26–98 (DTSNHRVDYS…VGEIPEEPSL (73 aa)) lie on the Extracellular side of the membrane. Residues 99–119 (LISIFISWFPMLLLIGVWIFF) traverse the membrane as a helical segment. At 120 to 613 (MRQMQMGGGK…WLEVDQKKDI (494 aa)) the chain is on the cytoplasmic side. 192–199 (GPPGTGKT) serves as a coordination point for ATP. Position 414 (His414) interacts with Zn(2+). Glu415 is a catalytic residue. Zn(2+) is bound by residues His418 and Asp492.

The protein in the central section; belongs to the AAA ATPase family. This sequence in the C-terminal section; belongs to the peptidase M41 family. In terms of assembly, homohexamer. Zn(2+) serves as cofactor.

It is found in the cell membrane. Functionally, acts as a processive, ATP-dependent zinc metallopeptidase for both cytoplasmic and membrane proteins. Plays a role in the quality control of integral membrane proteins. This is ATP-dependent zinc metalloprotease FtsH from Buchnera aphidicola subsp. Schizaphis graminum (strain Sg).